A 269-amino-acid polypeptide reads, in one-letter code: Hydroxyethylthiazole kinase (269 aa).

Substrate is bound at residue M46. The ATP site is built by R122 and T168. G195 provides a ligand contact to substrate.

Belongs to the Thz kinase family. It depends on Mg(2+) as a cofactor.

The enzyme catalyses 5-(2-hydroxyethyl)-4-methylthiazole + ATP = 4-methyl-5-(2-phosphooxyethyl)-thiazole + ADP + H(+). Its pathway is cofactor biosynthesis; thiamine diphosphate biosynthesis; 4-methyl-5-(2-phosphoethyl)-thiazole from 5-(2-hydroxyethyl)-4-methylthiazole: step 1/1. In terms of biological role, catalyzes the phosphorylation of the hydroxyl group of 4-methyl-5-beta-hydroxyethylthiazole (THZ). This is Hydroxyethylthiazole kinase from Geobacillus thermodenitrificans (strain NG80-2).